A 526-amino-acid chain; its full sequence is GMP synthase [glutamine-hydrolyzing] (526 aa).

Residues 14–208 enclose the Glutamine amidotransferase type-1 domain; the sequence is SILIVDFGSQ…VHDICGLAGD (195 aa). The active-site Nucleophile is C91. Residues H182 and E184 contribute to the active site. A GMPS ATP-PPase domain is found at 209–401; that stretch reads WTMAEFRQTK…LGMPDVFVDR (193 aa). Residue 236-242 participates in ATP binding; sequence SGGVDSS.

As to quaternary structure, homodimer.

It carries out the reaction XMP + L-glutamine + ATP + H2O = GMP + L-glutamate + AMP + diphosphate + 2 H(+). It participates in purine metabolism; GMP biosynthesis; GMP from XMP (L-Gln route): step 1/1. Catalyzes the synthesis of GMP from XMP. The chain is GMP synthase [glutamine-hydrolyzing] from Zymomonas mobilis subsp. mobilis (strain ATCC 31821 / ZM4 / CP4).